The chain runs to 36 residues: Egg-laying hormone (36 aa).

Lys-36 is subject to Lysine amide.

This sequence belongs to the molluscan ELH family. Bag cell neurons.

The protein localises to the secreted. Functionally, ELH acts as a neurotransmitter locally, upon neurons of the abdominal ganglion and as a hormone by diffusing into the circulating hemolymph and modulating the activity of other organs. It specifically causes contraction of smooth muscle in the ovotestis and expulsion of the egg string. The sequence is that of Egg-laying hormone from Aplysia fasciata (Mottled sea hare).